The chain runs to 512 residues: Maturase K (512 aa).

It belongs to the intron maturase 2 family. MatK subfamily.

It is found in the plastid. Its subcellular location is the chloroplast. Usually encoded in the trnK tRNA gene intron. Probably assists in splicing its own and other chloroplast group II introns. This chain is Maturase K, found in Lilium henryi (Henry's lily).